The sequence spans 381 residues: Selenoprotein P (381 aa).

Positions 1–19 (MWRSLGLALALCLLPSGGT) are cleaved as a signal peptide. N-linked (GlcNAc...) asparagine glycosylation occurs at asparagine 46. Selenocysteine 59 is a non-standard amino acid (selenocysteine). The N-linked (GlcNAc...) (complex) asparagine glycan is linked to asparagine 83. N-linked (GlcNAc...) asparagine glycans are attached at residues asparagine 119, asparagine 128, and asparagine 174. A disordered region spans residues 200–268 (TPSPHYHHEH…ENRDMPASED (69 aa)). Residues 204-216 (HYHHEHHHNHGHQ) show a composition bias toward basic residues. Residues 218–230 (LGSSELSENQQPG) show a composition bias toward polar residues. Residues 243–255 (LHHHHKHKGQHRQ) show a composition bias toward basic residues. Serine 266 bears the Phosphoserine mark. Residues selenocysteine 300, selenocysteine 318, and selenocysteine 330 are each a non-standard amino acid (selenocysteine). Asparagine 338 carries N-linked (GlcNAc...) asparagine glycosylation. 6 non-standard amino acids (selenocysteine) are found at residues selenocysteine 345, selenocysteine 352, selenocysteine 367, selenocysteine 369, selenocysteine 376, and selenocysteine 378. A disordered region spans residues 355-381 (SQQLIPTEASASURUKNQAKKUEUPSN).

This sequence belongs to the selenoprotein P family. In terms of processing, phosphorylation sites are present in the extracellular medium. As to expression, made in the liver and heart and secreted into the plasma. It is also found in the kidney.

It localises to the secreted. Functionally, might be responsible for some of the extracellular antioxidant defense properties of selenium or might be involved in the transport of selenium. May supply selenium to tissues such as brain and testis. The sequence is that of Selenoprotein P from Homo sapiens (Human).